Reading from the N-terminus, the 293-residue chain is GTPase Era (293 aa).

The Era-type G domain occupies 5-174 (RTISVCIIGR…ITGKAQIAPW (170 aa)). The tract at residues 13–20 (GRPNSGKS) is G1. 13-20 (GRPNSGKS) is a binding site for GTP. The interval 39-43 (QTTRS) is G2. Residues 60 to 63 (DTPG) are G3. GTP contacts are provided by residues 60-64 (DTPGI) and 122-125 (NKID). Residues 122 to 125 (NKID) are G4. The G5 stretch occupies residues 150–152 (ISA). The 78-residue stretch at 202-279 (LQQELPYKLT…HLFLFVKVHE (78 aa)) folds into the KH type-2 domain.

This sequence belongs to the TRAFAC class TrmE-Era-EngA-EngB-Septin-like GTPase superfamily. Era GTPase family. As to quaternary structure, monomer.

It is found in the cytoplasm. The protein localises to the cell inner membrane. Functionally, an essential GTPase that binds both GDP and GTP, with rapid nucleotide exchange. Plays a role in 16S rRNA processing and 30S ribosomal subunit biogenesis and possibly also in cell cycle regulation and energy metabolism. This is GTPase Era from Rickettsia akari (strain Hartford).